Consider the following 577-residue polypeptide: Arginine--tRNA ligase (577 aa).

Residues 122-132 carry the 'HIGH' region motif; that stretch reads PNVAKEMHVGH.

It belongs to the class-I aminoacyl-tRNA synthetase family. In terms of assembly, monomer.

The protein resides in the cytoplasm. It catalyses the reaction tRNA(Arg) + L-arginine + ATP = L-arginyl-tRNA(Arg) + AMP + diphosphate. This chain is Arginine--tRNA ligase, found in Escherichia coli O157:H7 (strain EC4115 / EHEC).